The following is a 156-amino-acid chain: ATP synthase subunit b (156 aa).

The helical transmembrane segment at 4–26 threads the bilayer; that stretch reads GATFWGPMISFALFVWFTMKYVW.

It belongs to the ATPase B chain family. In terms of assembly, F-type ATPases have 2 components, F(1) - the catalytic core - and F(0) - the membrane proton channel. F(1) has five subunits: alpha(3), beta(3), gamma(1), delta(1), epsilon(1). F(0) has three main subunits: a(1), b(2) and c(10-14). The alpha and beta chains form an alternating ring which encloses part of the gamma chain. F(1) is attached to F(0) by a central stalk formed by the gamma and epsilon chains, while a peripheral stalk is formed by the delta and b chains.

It localises to the cell inner membrane. In terms of biological role, f(1)F(0) ATP synthase produces ATP from ADP in the presence of a proton or sodium gradient. F-type ATPases consist of two structural domains, F(1) containing the extramembraneous catalytic core and F(0) containing the membrane proton channel, linked together by a central stalk and a peripheral stalk. During catalysis, ATP synthesis in the catalytic domain of F(1) is coupled via a rotary mechanism of the central stalk subunits to proton translocation. Functionally, component of the F(0) channel, it forms part of the peripheral stalk, linking F(1) to F(0). The protein is ATP synthase subunit b of Alkalilimnicola ehrlichii (strain ATCC BAA-1101 / DSM 17681 / MLHE-1).